We begin with the raw amino-acid sequence, 205 residues long: Melanocortin-2 receptor accessory protein 2 (205 aa).

An N-linked (GlcNAc...) asparagine glycan is attached at N9. The chain crosses the membrane as a helical span at residues 45–65 (IVIGFWVGLAVFVIFMFFVLT). At S89 the chain carries Phosphoserine.

It belongs to the MRAP family. As to quaternary structure, homodimer and heterodimer. Forms antiparallel homodimers and heterodimers with MRAP. Interacts with MC1R, MC2R, MC3R, MC4R and MC5R. As to expression, expressed in the adrenal gland and brain. Not expressed in other tissues.

It localises to the cell membrane. It is found in the endoplasmic reticulum membrane. In terms of biological role, modulator of melanocortin receptor 4 (MC4R), a receptor involved in energy homeostasis. Plays a central role in the control of energy homeostasis and body weight regulation by increasing ligand-sensitivity of MC4R and MC4R-mediated generation of cAMP. May also act as a negative regulator of MC2R: competes with MRAP for binding to MC2R and impairs the binding of corticotropin (ACTH) to MC2R. May also regulate activity of other melanocortin receptors (MC1R, MC3R and MC5R); however, additional evidence is required in vivo. This Homo sapiens (Human) protein is Melanocortin-2 receptor accessory protein 2 (MRAP2).